The following is a 308-amino-acid chain: SAP30-binding protein (308 aa).

A disordered region spans residues 15–101 (AEDSEPESDG…EAEKRDPQEL (87 aa)). The span at 16 to 26 (EDSEPESDGEA) shows a compositional bias: acidic residues. 4 positions are modified to phosphoserine: Ser18, Ser22, Ser43, and Ser52. Residues 57-78 (DEDGYEEEEDENSRQSEDDDSE) show a composition bias toward acidic residues. Basic and acidic residues predominate over residues 79 to 99 (TEKPEADDPKDNTEAEKRDPQ). Lys95 is covalently cross-linked (Glycyl lysine isopeptide (Lys-Gly) (interchain with G-Cter in SUMO2)). Ser113 is subject to Phosphoserine. Glycyl lysine isopeptide (Lys-Gly) (interchain with G-Cter in SUMO2) cross-links involve residues Lys220, Lys304, and Lys305.

Belongs to the HCNGP family. Interacts with histone deacetylase complex subunit SAP30.

It localises to the nucleus. Functionally, plays a role in transcriptional repression by promoting histone deacetylase activity, leading to deacetylation of histone H3. May be involved in the regulation of beta-2-microglobulin genes. In terms of biological role, (Microbial infection) Involved in transcriptional repression of HHV-1 genes TK and gC. This is SAP30-binding protein from Homo sapiens (Human).